Reading from the N-terminus, the 65-residue chain is Small vasohibin-binding protein (65 aa).

Positions 1-22 (MEPACRKDKQKQQTPTRGDRTK) are enriched in basic and acidic residues. A disordered region spans residues 1-30 (MEPACRKDKQKQQTPTRGDRTKQKTAQQEL). The stretch at 31–51 (KQRQRAEIYALNKVMTELEQQ) forms a coiled coil.

Belongs to the SVBP family.

It localises to the cytoplasm. The protein resides in the secreted. Its subcellular location is the cytoskeleton. Its function is as follows. Enhances the tyrosine carboxypeptidase activity of vash1 and vash2, thereby promoting the removal of the C-terminal tyrosine residue of alpha-tubulin. Also required to enhance the solubility and secretion of vash1 and vash2. May play a role in axon and excitatory synapse formation. The chain is Small vasohibin-binding protein from Danio rerio (Zebrafish).